We begin with the raw amino-acid sequence, 312 residues long: MIEFEKPIITKIDENKDYGRFVIEPLERGYGTTLGNSLRRVLLSSLPGAAVTSIKIDGVLHEFDTIPGVREDVMQIILNIKGLAVKSYVEEEKIVELDVEGPAEITAGDILTDSDIEIVNPDHYLFTIAEGANLKATMTVATNRGYVPAEKNKRDDAPVGTLAIDSIYTPVKKVNYQVEPARVGSNDNFDKLTIEIMTNGTIIPEDALGLSARVLIEHLNLFTDLTEVAKATDVMKETEQVSDEKVLDRTIEELDLSVRSYNCLKRAGINTVYDLTEKSESEMMKVRNLGRKSLEEVKVKLADLGLGLKNDK.

The segment at 1–226 (MIEFEKPIIT…EHLNLFTDLT (226 aa)) is alpha N-terminal domain (alpha-NTD). The interval 243 to 312 (DEKVLDRTIE…DLGLGLKNDK (70 aa)) is alpha C-terminal domain (alpha-CTD).

Belongs to the RNA polymerase alpha chain family. Homodimer. The RNAP catalytic core consists of 2 alpha, 1 beta, 1 beta' and 1 omega subunit. When a sigma factor is associated with the core the holoenzyme is formed, which can initiate transcription.

It catalyses the reaction RNA(n) + a ribonucleoside 5'-triphosphate = RNA(n+1) + diphosphate. Its function is as follows. DNA-dependent RNA polymerase catalyzes the transcription of DNA into RNA using the four ribonucleoside triphosphates as substrates. This is DNA-directed RNA polymerase subunit alpha from Streptococcus mutans serotype c (strain ATCC 700610 / UA159).